The following is a 742-amino-acid chain: Photosystem I P700 chlorophyll a apoprotein A2 2 (742 aa).

Helical transmembrane passes span 46–69, 135–158, 175–199, 273–291, 334–357, 373–399, 421–443, and 524–542; these read IFAT…FHVA, LYQG…LHLQ, LNHH…HVAI, MAHH…GHMY, LHFQ…QHMY, AALY…IFWV, AIIS…LYVH, and FLVH…LICV. Cys566 and Cys575 together coordinate [4Fe-4S] cluster. The next 2 membrane-spanning stretches (helical) occupy residues 583-604 and 651-673; these read SFYL…YWHW and LSVW…MFLI. Chlorophyll a-binding residues include His662, Met670, and Tyr678. Residue Trp679 coordinates phylloquinone. The chain crosses the membrane as a helical span at residues 715 to 735; sequence LVGLAHFTVGYILTYAAFLIA.

It belongs to the PsaA/PsaB family. In terms of assembly, the PsaA/B heterodimer binds the P700 chlorophyll special pair and subsequent electron acceptors. PSI consists of a core antenna complex that captures photons, and an electron transfer chain that converts photonic excitation into a charge separation. The cyanobacterial PSI reaction center is composed of one copy each of PsaA,B,C,D,E,F,I,J,K,L,M and X, and forms trimeric complexes. Requires PSI electron transfer chain: 5 chlorophyll a, 1 chlorophyll a', 2 phylloquinones and 3 4Fe-4S clusters. PSI core antenna: 90 chlorophyll a, 22 carotenoids, 3 phospholipids and 1 galactolipid. P700 is a chlorophyll a/chlorophyll a' dimer, A0 is one or more chlorophyll a, A1 is one or both phylloquinones and FX is a shared 4Fe-4S iron-sulfur center. as cofactor.

The protein localises to the cellular thylakoid membrane. It catalyses the reaction reduced [plastocyanin] + hnu + oxidized [2Fe-2S]-[ferredoxin] = oxidized [plastocyanin] + reduced [2Fe-2S]-[ferredoxin]. Functionally, psaA and PsaB bind P700, the primary electron donor of photosystem I (PSI), as well as the electron acceptors A0, A1 and FX. PSI is a plastocyanin/cytochrome c6-ferredoxin oxidoreductase, converting photonic excitation into a charge separation, which transfers an electron from the donor P700 chlorophyll pair to the spectroscopically characterized acceptors A0, A1, FX, FA and FB in turn. Oxidized P700 is reduced on the lumenal side of the thylakoid membrane by plastocyanin or cytochrome c6. The polypeptide is Photosystem I P700 chlorophyll a apoprotein A2 2 (Trichormus variabilis (strain ATCC 29413 / PCC 7937) (Anabaena variabilis)).